A 430-amino-acid chain; its full sequence is Zinc finger CCCH domain-containing protein 48 (430 aa).

Disordered regions lie at residues 1 to 27 (MDLD…TTDS) and 56 to 90 (GSGP…GTAN). Residues 26-52 (DSNQKVCFHWRAGRCNRYPCPYLHREL) form a C3H1-type 1 zinc finger. Residues 102 to 129 (TKTEKLCKFWVDGNCPYGDKCRYLHCWS) form a C3H1-type 2 zinc finger. WD repeat units follow at residues 142–183 (GHQK…GVLN), 221–258 (GPVG…SCFD), 265–304 (GHTL…QTLT), 306–342 (HTSV…NLEV), 345–389 (THKE…ERGK), and 391–429 (LAKQ…TPIL).

This Arabidopsis thaliana (Mouse-ear cress) protein is Zinc finger CCCH domain-containing protein 48 (ZFWD1).